Here is a 532-residue protein sequence, read N- to C-terminus: Probable cytochrome c oxidase subunit 1 (532 aa).

8 helical membrane-spanning segments follow: residues 33 to 53 (IMYI…SLLF), 74 to 94 (VLIT…ALFG), 95 to 115 (GFGN…FPRL), 118 to 138 (ISFW…FVDG), 163 to 183 (MAIF…INLI), 200 to 220 (PLFV…MPVL), 252 to 272 (LFWF…FGIV), and 284 to 304 (IFGY…GFIV). Position 79 (histidine 79) interacts with Fe(II)-heme a. 2 residues coordinate Cu cation: histidine 258 and tyrosine 262. Positions 307 and 308 each coordinate Cu cation. The next 2 membrane-spanning stretches (helical) occupy residues 318–338 (ALIY…IKIF) and 355–375 (MLFS…GIIL). Histidine 393 is a heme a3 binding site. A run of 3 helical transmembrane segments spans residues 394–414 (FHYT…YYWF), 431–451 (FWIT…LGLA), and 473–493 (IGAG…FYTL). Position 395 (histidine 395) interacts with Fe(II)-heme a.

The protein belongs to the heme-copper respiratory oxidase family.

The protein localises to the cell membrane. It catalyses the reaction 4 Fe(II)-[cytochrome c] + O2 + 8 H(+)(in) = 4 Fe(III)-[cytochrome c] + 2 H2O + 4 H(+)(out). Its pathway is energy metabolism; oxidative phosphorylation. In terms of biological role, cytochrome c oxidase is the component of the respiratory chain that catalyzes the reduction of oxygen to water. Subunits 1-3 form the functional core of the enzyme complex. CO I is the catalytic subunit of the enzyme. Electrons originating in cytochrome c are transferred via the copper A center of subunit 2 and heme A of subunit 1 to the bimetallic center formed by heme A3 and copper B. This Rickettsia conorii (strain ATCC VR-613 / Malish 7) protein is Probable cytochrome c oxidase subunit 1 (ctaD).